Reading from the N-terminus, the 1123-residue chain is Eukaryotic translation initiation factor 2-alpha kinase PK4 (1123 aa).

The interval 1–30 (MKKRIRSSYKVGSSNKYHKKNYTDNEKDKK) is disordered. The span at 21-30 (NYTDNEKDKK) shows a compositional bias: basic and acidic residues. ATP is bound by residues 245-253 (IGQGGFGSV) and K270. Disordered stretches follow at residues 409–493 (FYSD…NDEG), 572–609 (RNEDDKNGLDGDKNGLDGDKNGLDGDKNGLDGDKNELD), and 742–800 (ENDD…DDDI). The span at 419–428 (KNKENPEKNH) shows a compositional bias: basic and acidic residues. Over residues 455-477 (HKLKKRKNKKKKSKKKRKSKSKI) the composition is skewed to basic residues. 5 tandem repeats follow at residues 576-582 (DKNGLDG), 583-589 (DKNGLDG), 590-596 (DKNGLDG), 597-603 (DKNGLDG), and 604-610 (DKNELDD). The interval 576–610 (DKNGLDGDKNGLDGDKNGLDGDKNGLDGDKNELDD) is 5 X 7 AA tandem repeat of D-K-N-[GE]-L-D-[GD]. Residues 678 to 1049 (TNVESINTNG…KIKVLLDPHL (372 aa)) enclose the Protein kinase domain. Acidic residues predominate over residues 743–754 (NDDDDDDDDDDN). D886 (proton acceptor) is an active-site residue. Position 953 is a phosphothreonine (T953).

Belongs to the protein kinase superfamily. Ser/Thr protein kinase family. GCN2 subfamily. May form oligomers in response to stress; oligomerization may result in catalytic activity. Interacts with BIP; the interaction is disrupted in response to stress. In terms of processing, auto-phosphorylated.

The protein localises to the endoplasmic reticulum membrane. It carries out the reaction L-seryl-[protein] + ATP = O-phospho-L-seryl-[protein] + ADP + H(+). The enzyme catalyses L-threonyl-[protein] + ATP = O-phospho-L-threonyl-[protein] + ADP + H(+). With respect to regulation, dissociation from BIP and oligomerization, may results autophosphorylation and kinase activity induction. Functionally, during the asexual blood stage, phosphorylates translation factor eIF2alpha in late schizonts resulting in protein translation inhibition. Plays a role in trophozoite differentiation into schizonts. This Plasmodium falciparum protein is Eukaryotic translation initiation factor 2-alpha kinase PK4.